The sequence spans 100 residues: Urease subunit gamma (100 aa).

Belongs to the urease gamma subunit family. Heterotrimer of UreA (gamma), UreB (beta) and UreC (alpha) subunits. Three heterotrimers associate to form the active enzyme.

The protein localises to the cytoplasm. It catalyses the reaction urea + 2 H2O + H(+) = hydrogencarbonate + 2 NH4(+). Its pathway is nitrogen metabolism; urea degradation; CO(2) and NH(3) from urea (urease route): step 1/1. This is Urease subunit gamma from Flavobacterium johnsoniae (strain ATCC 17061 / DSM 2064 / JCM 8514 / BCRC 14874 / CCUG 350202 / NBRC 14942 / NCIMB 11054 / UW101) (Cytophaga johnsonae).